Here is a 528-residue protein sequence, read N- to C-terminus: Alpha-amylase (528 aa).

The signal sequence occupies residues 1–28; sequence MNKKWLNIPALIALLAAIAFGSVAPAEA. Residues Asn168 and Asp228 each coordinate Ca(2+). Catalysis depends on Asp258, which acts as the Nucleophile. A Ca(2+)-binding site is contributed by His262. The active-site Proton donor is Glu286.

Belongs to the glycosyl hydrolase 13 family. As to quaternary structure, monomer. The cofactor is Ca(2+).

It catalyses the reaction Endohydrolysis of (1-&gt;4)-alpha-D-glucosidic linkages in polysaccharides containing three or more (1-&gt;4)-alpha-linked D-glucose units.. This is Alpha-amylase from Niallia circulans (Bacillus circulans).